Consider the following 294-residue polypeptide: NAD kinase (294 aa).

The active-site Proton acceptor is the aspartate 74. NAD(+) contacts are provided by residues 74–75, 148–149, arginine 159, arginine 176, aspartate 178, 189–194, and glutamine 247; these read DG, ND, and TAYALS.

It belongs to the NAD kinase family. A divalent metal cation is required as a cofactor.

Its subcellular location is the cytoplasm. The enzyme catalyses NAD(+) + ATP = ADP + NADP(+) + H(+). Functionally, involved in the regulation of the intracellular balance of NAD and NADP, and is a key enzyme in the biosynthesis of NADP. Catalyzes specifically the phosphorylation on 2'-hydroxyl of the adenosine moiety of NAD to yield NADP. In Azoarcus sp. (strain BH72), this protein is NAD kinase.